A 356-amino-acid polypeptide reads, in one-letter code: SERTA domain-containing protein 4 (356 aa).

The disordered stretch occupies residues 33–53 (SYGGPSPPGPAQAPLQGDRGA). The SERTA domain maps to 101-147 (IFEERAHILYMSLEKLKFIDDPEVYLRRSVLINNLMKRIHGEIIMQN). A compositionally biased stretch (low complexity) spans 215–232 (TAASSPSASSSSSSSSSS). Disordered regions lie at residues 215-238 (TAASSPSASSSSSSSSSSPPLPLP), 280-302 (KLNDEKANDDTNRDGGPLSHEPV), and 332-356 (WKKSLRKKEASPPSNKLCCSKGSKI). Residues 280–292 (KLNDEKANDDTNR) show a composition bias toward basic and acidic residues.

The protein is SERTA domain-containing protein 4 (SERTAD4) of Homo sapiens (Human).